We begin with the raw amino-acid sequence, 285 residues long: MTSKEDGKAAPGEERRRSPLDHLPPPANSNKPLTPFSIEDILNKPSVRRSYSLCGAAHLLAAADKHAPGGLPLAGRALLSQTSPLCALEELASKTFKGLEVSVLQAAEGRDGMTIFGQRQTPKKRRKSRTAFTNHQIYELEKRFLYQKYLSPADRDQIAQQLGLTNAQVITWFQNRRAKLKRDLEEMKADVESAKKLGPSGQMDIVALAELEQNSEASGGGGGGGGGGCGRAKSRPGSPALPPGAPQAPGGGPLQLSPASPLTDQRASSQDCSEDEEDEEIDVDD.

Residues 1-20 (MTSKEDGKAAPGEERRRSPL) are compositionally biased toward basic and acidic residues. Residues 1-36 (MTSKEDGKAAPGEERRRSPLDHLPPPANSNKPLTPF) form a disordered region. Residues 125-184 (RRKSRTAFTNHQIYELEKRFLYQKYLSPADRDQIAQQLGLTNAQVITWFQNRRAKLKRDL) constitute a DNA-binding region (homeobox). Residues 212-285 (EQNSEASGGG…EEDEEIDVDD (74 aa)) are disordered. Gly residues predominate over residues 218–230 (SGGGGGGGGGGCG). Residues 272–285 (CSEDEEDEEIDVDD) show a composition bias toward acidic residues.

In terms of assembly, interacts with SKOR1 which acts as a transcriptional corepressor.

Its subcellular location is the nucleus. Functionally, transcription factor required for the development of GABAergic interneurons in the dorsal horn of the spinal cord and migration and further development of hypaxial muscle precursor cells for limb muscles, diaphragm and hypoglossal cord. This is Transcription factor LBX1 from Rattus norvegicus (Rat).